Here is a 403-residue protein sequence, read N- to C-terminus: Octaketide synthase 1 (403 aa).

Residue Cys-174 is part of the active site. CoA is bound by residues Ser-281 and 318-321 (GGRA).

This sequence belongs to the thiolase-like superfamily. Chalcone/stilbene synthases family. In terms of assembly, homodimer.

Its pathway is secondary metabolite biosynthesis; flavonoid biosynthesis. Its function is as follows. Catalyzes the iterative condensations of 8 molecules of malonyl-CoA to produce aromatic octaketides, SEK4 and SEK4b, the products of the minimal polyketide synthase for the benzoisochromanequinone actinorhodin. May be involved in the biosynthesis of the octaketide barbaloin. This chain is Octaketide synthase 1, found in Aloe arborescens (Kidachi aloe).